Reading from the N-terminus, the 142-residue chain is Nucleoside diphosphate kinase (142 aa).

The ATP site is built by Lys11, Phe59, Arg87, Thr93, Arg104, and Asn114. The Pros-phosphohistidine intermediate role is filled by His117.

Belongs to the NDK family. Homotetramer. Mg(2+) serves as cofactor.

Its subcellular location is the cytoplasm. The catalysed reaction is a 2'-deoxyribonucleoside 5'-diphosphate + ATP = a 2'-deoxyribonucleoside 5'-triphosphate + ADP. The enzyme catalyses a ribonucleoside 5'-diphosphate + ATP = a ribonucleoside 5'-triphosphate + ADP. Functionally, major role in the synthesis of nucleoside triphosphates other than ATP. The ATP gamma phosphate is transferred to the NDP beta phosphate via a ping-pong mechanism, using a phosphorylated active-site intermediate. This is Nucleoside diphosphate kinase from Photobacterium profundum (strain SS9).